The primary structure comprises 446 residues: Argininosuccinate synthase (446 aa).

Residues 17–25 and Ala-43 contribute to the ATP site; that span reads AFSGGLDTS. Tyr-99 lines the L-citrulline pocket. ATP contacts are provided by Gly-129 and Thr-131. L-aspartate-binding residues include Thr-131, Asn-135, and Asp-136. Asn-135 is a binding site for L-citrulline. Asp-136 contributes to the ATP binding site. Arg-139 and Ser-192 together coordinate L-citrulline. Asp-194 contacts ATP. The L-citrulline site is built by Thr-201, Glu-203, and Glu-280.

This sequence belongs to the argininosuccinate synthase family. Type 2 subfamily. In terms of assembly, homotetramer.

The protein resides in the cytoplasm. It catalyses the reaction L-citrulline + L-aspartate + ATP = 2-(N(omega)-L-arginino)succinate + AMP + diphosphate + H(+). It functions in the pathway amino-acid biosynthesis; L-arginine biosynthesis; L-arginine from L-ornithine and carbamoyl phosphate: step 2/3. The chain is Argininosuccinate synthase from Polaromonas sp. (strain JS666 / ATCC BAA-500).